Here is a 523-residue protein sequence, read N- to C-terminus: 2-isopropylmalate synthase (523 aa).

Positions 5-267 (VIIFDTTLRD…ETGINAKEIH (263 aa)) constitute a Pyruvate carboxyltransferase domain. Residues D14, H202, H204, and N238 each contribute to the Mn(2+) site. The segment at 392-523 (KLAQLVVHSD…QKDRSELGGV (132 aa)) is regulatory domain.

Belongs to the alpha-IPM synthase/homocitrate synthase family. LeuA type 1 subfamily. In terms of assembly, homodimer. Mn(2+) is required as a cofactor.

The protein localises to the cytoplasm. The enzyme catalyses 3-methyl-2-oxobutanoate + acetyl-CoA + H2O = (2S)-2-isopropylmalate + CoA + H(+). Its pathway is amino-acid biosynthesis; L-leucine biosynthesis; L-leucine from 3-methyl-2-oxobutanoate: step 1/4. Functionally, catalyzes the condensation of the acetyl group of acetyl-CoA with 3-methyl-2-oxobutanoate (2-ketoisovalerate) to form 3-carboxy-3-hydroxy-4-methylpentanoate (2-isopropylmalate). The chain is 2-isopropylmalate synthase from Shewanella sediminis (strain HAW-EB3).